A 1623-amino-acid chain; its full sequence is ABC transporter C family member 2 (1623 aa).

9 consecutive transmembrane segments (helical) span residues phenylalanine 37–alanine 57, phenylalanine 76–isoleucine 96, phenylalanine 109–leucine 129, phenylalanine 145–lysine 165, valine 172–methionine 192, alanine 336–cysteine 356, valine 440–isoleucine 460, phenylalanine 527–leucine 547, and phenylalanine 557–isoleucine 577. Residues phenylalanine 302–asparagine 582 enclose the ABC transmembrane type-1 1 domain. The 225-residue stretch at isoleucine 614–asparagine 838 folds into the ABC transporter 1 domain. Glycine 649–threonine 656 is an ATP binding site. Residues valine 842–serine 890 are disordered. Over residues tyrosine 845 to glutamine 856 the composition is skewed to acidic residues. Residues threonine 857–leucine 870 are compositionally biased toward polar residues. Positions serine 875–lysine 885 are enriched in basic and acidic residues. 6 consecutive transmembrane segments (helical) span residues alanine 914–phenylalanine 934, glycine 955–leucine 975, alanine 1032–isoleucine 1054, leucine 1058–tyrosine 1077, leucine 1143–valine 1163, and serine 1177–leucine 1197. Residues valine 921 to asparagine 1205 form the ABC transmembrane type-1 2 domain. An interaction with calmodulin and FKP42/TWD1 region spans residues tryptophan 1236–tyrosine 1251. One can recognise an ABC transporter 2 domain in the interval isoleucine 1242–glutamine 1476. Residue glycine 1276–serine 1283 coordinates ATP.

The protein belongs to the ABC transporter superfamily. ABCC family. Conjugate transporter (TC 3.A.1.208) subfamily. Interacts with FKBP42/TWD1 and probably with calmodulin (CaM). Ubiquitous, at low levels.

It localises to the vacuole membrane. It carries out the reaction ATP + H2O + xenobioticSide 1 = ADP + phosphate + xenobioticSide 2.. With respect to regulation, reciprocal promotion of DNP-GS and E(2)17betaG uptake. E(2)17betaG uptake is also stimulated by GSH and S-methyl-glutathione (S-methyl-GS), and, to a lower extent, by GSSG and C3G-GS. Metolachlor-GS and decyl-GS slightly inhibit E(2)17betaG uptake. Functionally, pump for glutathione S-conjugates. Mediates the transport of S-conjugates such as GSH, S-(2,4-dinitrophenyl)-glutathione (DNP-GS), GSSG, cyanidin 3-glucoside-GS (C3G-GS) and metolachlor-GS (MOC-GS), glucuronides such as 17-beta-estradiol 17-(beta-D-glucuronide) (E(2)17betaG), and of the chlorophyll catabolite such as B.napus nonfluorescent chlorophyll catabolite (Bn-NCC-1). The protein is ABC transporter C family member 2 (ABCC2) of Arabidopsis thaliana (Mouse-ear cress).